We begin with the raw amino-acid sequence, 511 residues long: GMP synthase [glutamine-hydrolyzing] (511 aa).

The region spanning 6–196 (LVLVLDFGSQ…VFDVCGCTGD (191 aa)) is the Glutamine amidotransferase type-1 domain. The active-site Nucleophile is C83. Residues H170 and E172 contribute to the active site. The region spanning 197–386 (WSIENFIDME…LGVPDRIVWR (190 aa)) is the GMPS ATP-PPase domain. 224-230 (SGGVDSS) is an ATP binding site.

As to quaternary structure, homodimer.

The enzyme catalyses XMP + L-glutamine + ATP + H2O = GMP + L-glutamate + AMP + diphosphate + 2 H(+). It participates in purine metabolism; GMP biosynthesis; GMP from XMP (L-Gln route): step 1/1. Its function is as follows. Catalyzes the synthesis of GMP from XMP. The sequence is that of GMP synthase [glutamine-hydrolyzing] from Oceanobacillus iheyensis (strain DSM 14371 / CIP 107618 / JCM 11309 / KCTC 3954 / HTE831).